Reading from the N-terminus, the 387-residue chain is Formate-dependent phosphoribosylglycinamide formyltransferase (387 aa).

N(1)-(5-phospho-beta-D-ribosyl)glycinamide-binding positions include 12–13 (EL) and glutamate 72. Residues arginine 104, lysine 145, 150–155 (SSGKGQ), 185–188 (EEFI), and glutamate 193 each bind ATP. The ATP-grasp domain maps to 109 to 300 (DLAAKDLKLL…EFELHLRAIL (192 aa)). Mg(2+) contacts are provided by glutamate 258 and glutamate 270. Residues aspartate 277, lysine 348, and 355-356 (RR) each bind N(1)-(5-phospho-beta-D-ribosyl)glycinamide.

Belongs to the PurK/PurT family. As to quaternary structure, homodimer.

It carries out the reaction N(1)-(5-phospho-beta-D-ribosyl)glycinamide + formate + ATP = N(2)-formyl-N(1)-(5-phospho-beta-D-ribosyl)glycinamide + ADP + phosphate + H(+). It participates in purine metabolism; IMP biosynthesis via de novo pathway; N(2)-formyl-N(1)-(5-phospho-D-ribosyl)glycinamide from N(1)-(5-phospho-D-ribosyl)glycinamide (formate route): step 1/1. Involved in the de novo purine biosynthesis. Catalyzes the transfer of formate to 5-phospho-ribosyl-glycinamide (GAR), producing 5-phospho-ribosyl-N-formylglycinamide (FGAR). Formate is provided by PurU via hydrolysis of 10-formyl-tetrahydrofolate. The protein is Formate-dependent phosphoribosylglycinamide formyltransferase of Leptospira interrogans serogroup Icterohaemorrhagiae serovar copenhageni (strain Fiocruz L1-130).